The chain runs to 161 residues: UPF0763 protein Cla_1130 (161 aa).

Belongs to the UPF0763 family.

The chain is UPF0763 protein Cla_1130 from Campylobacter lari (strain RM2100 / D67 / ATCC BAA-1060).